Reading from the N-terminus, the 378-residue chain is Acetylornithine deacetylase (378 aa).

Histidine 76 is a binding site for Zn(2+). The active site involves aspartate 78. Aspartate 108 is a Zn(2+) binding site. Glutamate 140 is an active-site residue. Positions 141, 165, and 351 each coordinate Zn(2+).

Belongs to the peptidase M20A family. ArgE subfamily. As to quaternary structure, homodimer. Requires Zn(2+) as cofactor. Co(2+) serves as cofactor. The cofactor is glutathione.

Its subcellular location is the cytoplasm. It carries out the reaction N(2)-acetyl-L-ornithine + H2O = L-ornithine + acetate. Its pathway is amino-acid biosynthesis; L-arginine biosynthesis; L-ornithine from N(2)-acetyl-L-ornithine (linear): step 1/1. Functionally, catalyzes the hydrolysis of the amide bond of N(2)-acetylated L-amino acids. Cleaves the acetyl group from N-acetyl-L-ornithine to form L-ornithine, an intermediate in L-arginine biosynthesis pathway, and a branchpoint in the synthesis of polyamines. The sequence is that of Acetylornithine deacetylase from Vibrio parahaemolyticus serotype O3:K6 (strain RIMD 2210633).